Consider the following 250-residue polypeptide: Ubiquinone/menaquinone biosynthesis C-methyltransferase UbiE (250 aa).

S-adenosyl-L-methionine-binding positions include T74, D94, 122–123 (DA), and S139.

This sequence belongs to the class I-like SAM-binding methyltransferase superfamily. MenG/UbiE family.

The enzyme catalyses a 2-demethylmenaquinol + S-adenosyl-L-methionine = a menaquinol + S-adenosyl-L-homocysteine + H(+). It catalyses the reaction a 2-methoxy-6-(all-trans-polyprenyl)benzene-1,4-diol + S-adenosyl-L-methionine = a 5-methoxy-2-methyl-3-(all-trans-polyprenyl)benzene-1,4-diol + S-adenosyl-L-homocysteine + H(+). Its pathway is quinol/quinone metabolism; menaquinone biosynthesis; menaquinol from 1,4-dihydroxy-2-naphthoate: step 2/2. It functions in the pathway cofactor biosynthesis; ubiquinone biosynthesis. In terms of biological role, methyltransferase required for the conversion of demethylmenaquinol (DMKH2) to menaquinol (MKH2) and the conversion of 2-polyprenyl-6-methoxy-1,4-benzoquinol (DDMQH2) to 2-polyprenyl-3-methyl-6-methoxy-1,4-benzoquinol (DMQH2). This is Ubiquinone/menaquinone biosynthesis C-methyltransferase UbiE from Roseobacter denitrificans (strain ATCC 33942 / OCh 114) (Erythrobacter sp. (strain OCh 114)).